A 386-amino-acid chain; its full sequence is 2-isopropylmalate synthase (386 aa).

Positions V12 to Y265 constitute a Pyruvate carboxyltransferase domain. A divalent metal cation is bound by residues D21, H203, H205, and N239.

The protein belongs to the alpha-IPM synthase/homocitrate synthase family. Homodimer. The cofactor is a divalent metal cation.

It catalyses the reaction 3-methyl-2-oxobutanoate + acetyl-CoA + H2O = (2S)-2-isopropylmalate + CoA + H(+). The protein operates within amino-acid biosynthesis; L-leucine biosynthesis; L-leucine from 3-methyl-2-oxobutanoate: step 1/4. Functionally, catalyzes the condensation of the acetyl group of acetyl-CoA with 3-methyl-2-oxobutanoate (2-oxoisovalerate) to form 3-carboxy-3-hydroxy-4-methylpentanoate (2-isopropylmalate). Carries out the first step of the leucine biosynthesis pathway. The sequence is that of 2-isopropylmalate synthase (leuA) from Sulfurisphaera tokodaii (strain DSM 16993 / JCM 10545 / NBRC 100140 / 7) (Sulfolobus tokodaii).